A 279-amino-acid polypeptide reads, in one-letter code: Putative pyruvate, phosphate dikinase regulatory protein (279 aa).

153–160 (GISRTSKT) lines the ADP pocket.

The protein belongs to the pyruvate, phosphate/water dikinase regulatory protein family. PDRP subfamily.

It carries out the reaction N(tele)-phospho-L-histidyl/L-threonyl-[pyruvate, phosphate dikinase] + ADP = N(tele)-phospho-L-histidyl/O-phospho-L-threonyl-[pyruvate, phosphate dikinase] + AMP + H(+). The catalysed reaction is N(tele)-phospho-L-histidyl/O-phospho-L-threonyl-[pyruvate, phosphate dikinase] + phosphate + H(+) = N(tele)-phospho-L-histidyl/L-threonyl-[pyruvate, phosphate dikinase] + diphosphate. Its function is as follows. Bifunctional serine/threonine kinase and phosphorylase involved in the regulation of the pyruvate, phosphate dikinase (PPDK) by catalyzing its phosphorylation/dephosphorylation. In Bartonella bacilliformis (strain ATCC 35685 / KC583 / Herrer 020/F12,63), this protein is Putative pyruvate, phosphate dikinase regulatory protein.